The primary structure comprises 884 residues: Alanine--tRNA ligase (884 aa).

Zn(2+) contacts are provided by H565, H569, C672, and H676.

This sequence belongs to the class-II aminoacyl-tRNA synthetase family. The cofactor is Zn(2+).

The protein resides in the cytoplasm. The enzyme catalyses tRNA(Ala) + L-alanine + ATP = L-alanyl-tRNA(Ala) + AMP + diphosphate. In terms of biological role, catalyzes the attachment of alanine to tRNA(Ala) in a two-step reaction: alanine is first activated by ATP to form Ala-AMP and then transferred to the acceptor end of tRNA(Ala). Also edits incorrectly charged Ser-tRNA(Ala) and Gly-tRNA(Ala) via its editing domain. This chain is Alanine--tRNA ligase, found in Sphingopyxis alaskensis (strain DSM 13593 / LMG 18877 / RB2256) (Sphingomonas alaskensis).